A 201-amino-acid polypeptide reads, in one-letter code: RILP-like protein 2 (201 aa).

The region spanning 14–108 is the RH1 domain; it reads SPEMALDKDP…LRDGPQMGVG (95 aa). A coiled-coil region spans residues 67 to 155; it reads LEMLEALVNQ…AQDELQCYKS (89 aa). The RH2 domain occupies 121 to 197; it reads RPRFTLQELR…TVKSLFSFKQ (77 aa). Residues 175-201 are disordered; it reads TSSPRSNASKEKSTVKSLFSFKQGKNT.

Belongs to the RILPL family.

The protein resides in the cytoplasm. It is found in the cytosol. It localises to the cytoskeleton. Its subcellular location is the microtubule organizing center. The protein localises to the centrosome. The protein resides in the cell projection. It is found in the cilium. Involved in cell shape and neuronal morphogenesis, positively regulating the establishment and maintenance of dendritic spines. Plays a role in cellular protein transport. The chain is RILP-like protein 2 (rilpl2) from Xenopus laevis (African clawed frog).